The sequence spans 508 residues: MKLAYWMYAGPAHIGTLRIASSFKNVHAIMHAPLGDDYFNVMRSMLERERDYTPVTTSVVDRHVLARGSQEKVVDNITRKDAEEHPDLIVLTPTCTSSILQEDLQNFVERAQLEAKGDVMLADVNHYRVNELQAADRTLQQIVQFYIAKARKQGNLVTEKTEKPSVNIFGMTTLGFHNNHDATELKKLMSDLGIEVNAIVPAGASVHELKSLPRAWFNLVPYRETGLLAAEFLQQEFNMPYVDITPIGIVETARCIRKIQQVINAQGANVDYEPFIDQQTRFVSQAAWFSRSIDCQNLTGKKAVVFGDNTHAAALTKILAREMGIHVLLAGTYCKYDEAWFREQVSEYCDDVLVSDDNGQIADAIARLEPAAIFGTQMERHVGKRLDIPCGVIAAPIHIQNFPVGYKPFVGYEGSNQIVDLIYNSFTLGMEDHLLEIFGGHDTKEVITKSVSADSDLNWSKDGLAELNRIPGFVRGKVKRNTEKFARDRNITQITAEVLYAAKEAVGA.

Aspartate 36 lines the [4Fe-4S] cluster pocket. The active-site Proton donor is the aspartate 294. 429-430 lines the substrate pocket; the sequence is GM.

It belongs to the ChlB/BchB/BchZ family. In terms of assembly, protochlorophyllide reductase is composed of three subunits; ChlL, ChlN and ChlB. Forms a heterotetramer of two ChlB and two ChlN subunits. [4Fe-4S] cluster serves as cofactor.

It carries out the reaction chlorophyllide a + oxidized 2[4Fe-4S]-[ferredoxin] + 2 ADP + 2 phosphate = protochlorophyllide a + reduced 2[4Fe-4S]-[ferredoxin] + 2 ATP + 2 H2O. Its pathway is porphyrin-containing compound metabolism; chlorophyll biosynthesis (light-independent). In terms of biological role, component of the dark-operative protochlorophyllide reductase (DPOR) that uses Mg-ATP and reduced ferredoxin to reduce ring D of protochlorophyllide (Pchlide) to form chlorophyllide a (Chlide). This reaction is light-independent. The NB-protein (ChlN-ChlB) is the catalytic component of the complex. This Leptolyngbya boryana (Plectonema boryanum) protein is Light-independent protochlorophyllide reductase subunit B.